Reading from the N-terminus, the 352-residue chain is Protein RecA (352 aa).

67–74 (GPESSGKT) contacts ATP.

It belongs to the RecA family.

The protein localises to the cytoplasm. Its function is as follows. Can catalyze the hydrolysis of ATP in the presence of single-stranded DNA, the ATP-dependent uptake of single-stranded DNA by duplex DNA, and the ATP-dependent hybridization of homologous single-stranded DNAs. It interacts with LexA causing its activation and leading to its autocatalytic cleavage. The protein is Protein RecA of Aggregatibacter actinomycetemcomitans (Actinobacillus actinomycetemcomitans).